The primary structure comprises 299 residues: CRISPR system Cms protein Csm4 (299 aa).

Belongs to the CRISPR-associated Csm4 family. Part of the Csm effector complex that includes at least Cas10(1), Csm2(3), Csm3(5), Csm4(1), Csm5(1) and mature crRNA. The Csm complex is elongated and slightly twisted with a maximal length of 215 Angstroms and a diameter of 75-80 Angstroms. It has been modeled to have a central protein filamant of Csm3 subunits along which the dsRNA helix of paired crRNA and target RNA binds. The filament is capped at one end by Cas10 and Csm4 and at the other end by Csm5; ssDNA is thought to bind to the N-terminal HD domain of Cas10. Csm with a precursor crRNA does not include Csm5, while Cas6, the enzyme probably involved in pre-crRNA processing, is found associated with a subset of the Csm complex.

In terms of biological role, CRISPR (clustered regularly interspaced short palindromic repeat) is an adaptive immune system that provides protection against mobile genetic elements (viruses, transposable elements and conjugative plasmids). CRISPR clusters contain spacers, sequences complementary to antecedent mobile elements, and target invading nucleic acids. CRISPR clusters are transcribed and processed into CRISPR RNA (crRNA). The type III-A Csm effector complex binds crRNA and acts as a crRNA-guided RNase, DNase and cyclic oligoadenylate synthase; binding of target RNA cognate to the crRNA is required for all activities. In a heterologous host this Csm effector complex restricts ssRNA phage MS2, suggesting it may target RNA viruses in vivo. Functionally, csm functions as a non-specific ssDNase. Base-pairing between crRNA and target RNA to form a ternary Csm complex activates a ssDNase activity; target RNA cleavage suppresses the ssDNase, a temporal control that prevents uncontrolled DNA degradation. Viral RNA transcripts probably tether the Csm complex to the viral genome, recruiting Cas10 ssDNA activity which is able to degrade DNA in the transcription bubble, spatially controlling the DNase activity. Its function is as follows. The subunit probably binds to the 5' handle of the crRNA, helping in discrimination between self- and non-self. The chain is CRISPR system Cms protein Csm4 from Streptococcus thermophilus.